The following is a 217-amino-acid chain: MVNFDIARKRMVQEQIVGRGITTPRLLEVFQKVPRHLFVQEAMAVQAYSDGPLPIGEKQTISQPYIVALMTDLLELTGNDHVLEIGTGSGYQTAILASLVRRVWTIERIRPLAMQARKVLDTLHLLNVNIKVGDGTLGWPEEGPFDAILVTAGAPAVPETLAAQLAPGGRLVIPVGDESNQTLLRIRKAADGTLTQETGIGCRFVPLIGQQGWQLNS.

Residue Ser-62 is part of the active site.

It belongs to the methyltransferase superfamily. L-isoaspartyl/D-aspartyl protein methyltransferase family.

Its subcellular location is the cytoplasm. It carries out the reaction [protein]-L-isoaspartate + S-adenosyl-L-methionine = [protein]-L-isoaspartate alpha-methyl ester + S-adenosyl-L-homocysteine. In terms of biological role, catalyzes the methyl esterification of L-isoaspartyl residues in peptides and proteins that result from spontaneous decomposition of normal L-aspartyl and L-asparaginyl residues. It plays a role in the repair and/or degradation of damaged proteins. This Trichlorobacter lovleyi (strain ATCC BAA-1151 / DSM 17278 / SZ) (Geobacter lovleyi) protein is Protein-L-isoaspartate O-methyltransferase.